A 260-amino-acid polypeptide reads, in one-letter code: Triosephosphate isomerase (260 aa).

11 to 13 (NWK) is a substrate binding site. The active-site Electrophile is His-103. The active-site Proton acceptor is the Glu-175. Residues Gly-181, Ser-220, and 241 to 242 (GG) contribute to the substrate site.

It belongs to the triosephosphate isomerase family. As to quaternary structure, homodimer.

The protein localises to the cytoplasm. The enzyme catalyses D-glyceraldehyde 3-phosphate = dihydroxyacetone phosphate. It functions in the pathway carbohydrate biosynthesis; gluconeogenesis. Its pathway is carbohydrate degradation; glycolysis; D-glyceraldehyde 3-phosphate from glycerone phosphate: step 1/1. Functionally, involved in the gluconeogenesis. Catalyzes stereospecifically the conversion of dihydroxyacetone phosphate (DHAP) to D-glyceraldehyde-3-phosphate (G3P). The protein is Triosephosphate isomerase of Shewanella loihica (strain ATCC BAA-1088 / PV-4).